The sequence spans 422 residues: Serine--tRNA ligase (422 aa).

231-233 (TSE) serves as a coordination point for L-serine. Residue 262–264 (RQE) coordinates ATP. Glu285 provides a ligand contact to L-serine. 349-352 (EISS) contacts ATP. Ser384 provides a ligand contact to L-serine.

The protein belongs to the class-II aminoacyl-tRNA synthetase family. Type-1 seryl-tRNA synthetase subfamily. In terms of assembly, homodimer. The tRNA molecule binds across the dimer.

Its subcellular location is the cytoplasm. The enzyme catalyses tRNA(Ser) + L-serine + ATP = L-seryl-tRNA(Ser) + AMP + diphosphate + H(+). It catalyses the reaction tRNA(Sec) + L-serine + ATP = L-seryl-tRNA(Sec) + AMP + diphosphate + H(+). It functions in the pathway aminoacyl-tRNA biosynthesis; selenocysteinyl-tRNA(Sec) biosynthesis; L-seryl-tRNA(Sec) from L-serine and tRNA(Sec): step 1/1. In terms of biological role, catalyzes the attachment of serine to tRNA(Ser). Is also able to aminoacylate tRNA(Sec) with serine, to form the misacylated tRNA L-seryl-tRNA(Sec), which will be further converted into selenocysteinyl-tRNA(Sec). The sequence is that of Serine--tRNA ligase from Mycoplasma mycoides subsp. mycoides SC (strain CCUG 32753 / NCTC 10114 / PG1).